The chain runs to 301 residues: Homoserine O-acetyltransferase (301 aa).

Cys-142 functions as the Acyl-thioester intermediate in the catalytic mechanism. 2 residues coordinate substrate: Lys-163 and Ser-192. His-235 acts as the Proton acceptor in catalysis. Residue Glu-237 is part of the active site. Position 249 (Arg-249) interacts with substrate.

It belongs to the MetA family.

The protein resides in the cytoplasm. The enzyme catalyses L-homoserine + acetyl-CoA = O-acetyl-L-homoserine + CoA. It functions in the pathway amino-acid biosynthesis; L-methionine biosynthesis via de novo pathway; O-acetyl-L-homoserine from L-homoserine: step 1/1. Transfers an acetyl group from acetyl-CoA to L-homoserine, forming acetyl-L-homoserine. This chain is Homoserine O-acetyltransferase, found in Bacillus cytotoxicus (strain DSM 22905 / CIP 110041 / 391-98 / NVH 391-98).